Here is a 246-residue protein sequence, read N- to C-terminus: Uroporphyrinogen-III synthase (246 aa).

The protein belongs to the uroporphyrinogen-III synthase family. In terms of assembly, monomer.

It catalyses the reaction hydroxymethylbilane = uroporphyrinogen III + H2O. Its pathway is porphyrin-containing compound metabolism; protoporphyrin-IX biosynthesis; coproporphyrinogen-III from 5-aminolevulinate: step 3/4. Its function is as follows. Catalyzes cyclization of the linear tetrapyrrole, hydroxymethylbilane, to the macrocyclic uroporphyrinogen III. This chain is Uroporphyrinogen-III synthase (hemD), found in Escherichia coli (strain K12).